Reading from the N-terminus, the 464-residue chain is GTPase Der (464 aa).

2 consecutive EngA-type G domains span residues 5–169 (PTIA…KQKG) and 190–368 (IKVA…RESH). GTP-binding positions include 11 to 18 (GRPNVGKS), 58 to 62 (DTGGI), 121 to 124 (NKAD), 196 to 203 (GRPNAGKS), 243 to 247 (DTAGM), and 308 to 311 (NKFD). One can recognise a KH-like domain in the interval 369-461 (NLPTTGQLNR…PVIFSARSRV (93 aa)).

The protein belongs to the TRAFAC class TrmE-Era-EngA-EngB-Septin-like GTPase superfamily. EngA (Der) GTPase family. Associates with the 50S ribosomal subunit.

Its function is as follows. GTPase that plays an essential role in the late steps of ribosome biogenesis. In Akkermansia muciniphila (strain ATCC BAA-835 / DSM 22959 / JCM 33894 / BCRC 81048 / CCUG 64013 / CIP 107961 / Muc), this protein is GTPase Der.